The chain runs to 1133 residues: RNA-dependent RNA polymerase 2 (1133 aa).

Mg(2+)-binding residues include Asp-830, Asp-832, and Asp-834.

The protein belongs to the RdRP family. Interacts with NRPD1 and SHH1. Associates with Pol IV complex, forming an interpolymerase channel bridging their active sites, through which the Pol IV-generated transcript is handed over to the RDR2 active site after being backtracked, where it is used as the template for double-stranded RNA (dsRNA) synthesis. Interacts with JMJ24.

It localises to the nucleus. It is found in the nucleoplasm. The protein resides in the nucleolus. It carries out the reaction RNA(n) + a ribonucleoside 5'-triphosphate = RNA(n+1) + diphosphate. Its function is as follows. RNA-dependent direct polymerase involved in the production of small interfering RNAs (siRNAs). Binds to single-stranded RNA (ssRNA); engages ssRNAs longer than 7 nucleotides and initiates internal to their 3' ends. Able to transcribe the RNA of an RNA/DNA hybrid, the transcript produced by Pol IV, if its 3' end is accessible, to generate double-stranded small interfering RNAs (dsRNAs) precursor essential for establishing and maintaining DNA methylation. Required for the biogenesis of endogenous siRNAs of 24 nucleotide which derive from heterochromatin and DNA repeats such as transposons or endogenous gene tandem repeats, such as repeats present in FWA gene. Involved in transcriptional gene silencing (TGS). Component of the RNA-directed DNA methylation (RdDM) silencing pathway that utilizes siRNAs to guide DNA methyltransferases to asymmetric cytosines. Involved in control of flowering time through RdDM of FWA locus. Required for reception of long-distance mRNA silencing in the shoot. Required for the formation of telomeric siRNAs and the RNA-dependent DNA methylation of asymmetric cytosines in telomeric (5'-CCCTAAA-3') repeats. This chain is RNA-dependent RNA polymerase 2, found in Arabidopsis thaliana (Mouse-ear cress).